Consider the following 313-residue polypeptide: ANLFAMQLATASVLPAVLTAAIELDLLEIMARAGPGAYLTPGEVASQLPTQNPDAPVMLDRIFRLLASYSVLTCTLCDLPEGKVERLYGLAPLCKFLVKNEDGVSLAPLRLIDQDRVFLESWYYMKDAILEGGIPFHKAHGMTAFDYPGTDPRFNKIFNRAMSDHSTIMMKKILETYNGFEGLKTVVDVGGGTGAILNMIVAKYPSIKGINFDLPHVIEDAPSYPGVEHVGGDMFVNIPNGDAVFMKWICHDWSDEHCAKLLKNCYDALPVNGRVIVAEYILPAYPDQSLSTKGVIHMDCIMLTHFSGGKERT.

Substrate is bound at residue 112-118 (IDQDRVF). The tract at residues 144 to 162 (AFDYPGTDPRFNKIFNRAM) is substrate binding. S-adenosyl-L-methionine is bound by residues G190, D213, D233, M234, and K247. The active-site Proton acceptor is H251.

Belongs to the class I-like SAM-binding methyltransferase superfamily. Cation-independent O-methyltransferase family. COMT subfamily. As to quaternary structure, homodimer.

It catalyses the reaction (E)-caffeate + S-adenosyl-L-methionine = (E)-ferulate + S-adenosyl-L-homocysteine + H(+). It functions in the pathway aromatic compound metabolism; phenylpropanoid biosynthesis. Functionally, catalyzes the conversion of caffeic acid to ferulic acid and of 5-hydroxyferulic acid to sinapic acid. The resulting products may subsequently be converted to the corresponding alcohols that are incorporated into lignins. In Eucalyptus globulus (Tasmanian blue gum), this protein is Caffeic acid 3-O-methyltransferase (COMT1).